Consider the following 207-residue polypeptide: ATP synthase subunit b 2 (207 aa).

A helical membrane pass occupies residues 58–78 (LLWLVITFGVFYLLMQKVIAP).

It belongs to the ATPase B chain family. F-type ATPases have 2 components, F(1) - the catalytic core - and F(0) - the membrane proton channel. F(1) has five subunits: alpha(3), beta(3), gamma(1), delta(1), epsilon(1). F(0) has three main subunits: a(1), b(2) and c(10-14). The alpha and beta chains form an alternating ring which encloses part of the gamma chain. F(1) is attached to F(0) by a central stalk formed by the gamma and epsilon chains, while a peripheral stalk is formed by the delta and b chains.

The protein resides in the cell inner membrane. F(1)F(0) ATP synthase produces ATP from ADP in the presence of a proton or sodium gradient. F-type ATPases consist of two structural domains, F(1) containing the extramembraneous catalytic core and F(0) containing the membrane proton channel, linked together by a central stalk and a peripheral stalk. During catalysis, ATP synthesis in the catalytic domain of F(1) is coupled via a rotary mechanism of the central stalk subunits to proton translocation. In terms of biological role, component of the F(0) channel, it forms part of the peripheral stalk, linking F(1) to F(0). The b'-subunit is a diverged and duplicated form of b found in plants and photosynthetic bacteria. In Rhizobium johnstonii (strain DSM 114642 / LMG 32736 / 3841) (Rhizobium leguminosarum bv. viciae), this protein is ATP synthase subunit b 2 (atpF2).